Consider the following 500-residue polypeptide: Glycerol kinase (500 aa).

Threonine 12 provides a ligand contact to ADP. 3 residues coordinate ATP: threonine 12, threonine 13, and serine 14. Threonine 12 serves as a coordination point for sn-glycerol 3-phosphate. ADP is bound at residue arginine 16. Sn-glycerol 3-phosphate-binding residues include arginine 82, glutamate 83, tyrosine 134, and aspartate 243. Glycerol contacts are provided by arginine 82, glutamate 83, tyrosine 134, aspartate 243, and glutamine 244. Positions 265 and 308 each coordinate ADP. ATP contacts are provided by threonine 265, glycine 308, glutamine 312, and glycine 411. Glycine 411 contacts ADP.

It belongs to the FGGY kinase family.

The enzyme catalyses glycerol + ATP = sn-glycerol 3-phosphate + ADP + H(+). Its pathway is polyol metabolism; glycerol degradation via glycerol kinase pathway; sn-glycerol 3-phosphate from glycerol: step 1/1. With respect to regulation, inhibited by fructose 1,6-bisphosphate (FBP). Functionally, key enzyme in the regulation of glycerol uptake and metabolism. Catalyzes the phosphorylation of glycerol to yield sn-glycerol 3-phosphate. In Chelativorans sp. (strain BNC1), this protein is Glycerol kinase.